The following is a 473-amino-acid chain: Arginine biosynthesis bifunctional protein ArgJ, mitochondrial (473 aa).

Residues T201, K230, T241, E328, N468, and T473 each contribute to the substrate site. T241 (nucleophile) is an active-site residue.

Belongs to the ArgJ family. As to quaternary structure, heterodimer of an alpha and a beta chain. In terms of processing, the alpha and beta chains are autoproteolytically processed from a single precursor protein within the mitochondrion.

The protein localises to the mitochondrion matrix. The enzyme catalyses N(2)-acetyl-L-ornithine + L-glutamate = N-acetyl-L-glutamate + L-ornithine. The catalysed reaction is L-glutamate + acetyl-CoA = N-acetyl-L-glutamate + CoA + H(+). It functions in the pathway amino-acid biosynthesis; L-arginine biosynthesis; L-ornithine and N-acetyl-L-glutamate from L-glutamate and N(2)-acetyl-L-ornithine (cyclic): step 1/1. Its pathway is amino-acid biosynthesis; L-arginine biosynthesis; N(2)-acetyl-L-ornithine from L-glutamate: step 1/4. Functionally, catalyzes two activities which are involved in the cyclic version of arginine biosynthesis: the synthesis of acetylglutamate from glutamate and acetyl-CoA, and of ornithine by transacetylation between acetylornithine and glutamate. The polypeptide is Arginine biosynthesis bifunctional protein ArgJ, mitochondrial (Blastomyces gilchristii (strain SLH14081) (Blastomyces dermatitidis)).